We begin with the raw amino-acid sequence, 367 residues long: Avirulence protein ATR5 (367 aa).

An N-terminal signal peptide occupies residues 1–16; the sequence is MRLISPALVVSTAIQA. N-linked (GlcNAc...) asparagine glycosylation is present at asparagine 20. A disordered region spans residues 33-65; that stretch reads NPLASAHPPDVGYDGVPAGRVRNPDDPTTEERT. A compositionally biased stretch (basic and acidic residues) spans 54–65; the sequence is RNPDDPTTEERT. Positions 61-64 match the dEER motif; sequence TEER.

Belongs to the RxLR effector family.

It localises to the secreted. The protein localises to the host cell. Its function is as follows. Secreted effector that acts as an elicitor of hypersensitive response (HR) specifically on plants carrying defense protein RPP5. This Hyaloperonospora arabidopsidis (strain Emoy2) (Downy mildew agent) protein is Avirulence protein ATR5.